The sequence spans 191 residues: MNTELKILMAGVDEVGRGPLAGAVVTAAVILKKPIDGLTDSKKLSPKQRNLLAIRIKEEALAFAYGRAEVEEIDQLNIHHATLLAMRRAVEALPIQPDNVVVDGAFTPQLNIPCKAIVQGDSLVPEISAASILAKVLRDEEMVALDKIYPGYGFAEHKGYATPVHKEALMRLGPCRIHRRSYSPVADLISK.

Positions 7–191 constitute an RNase H type-2 domain; it reads ILMAGVDEVG…YSPVADLISK (185 aa). Residues aspartate 13, glutamate 14, and aspartate 103 each coordinate a divalent metal cation.

The protein belongs to the RNase HII family. Mn(2+) serves as cofactor. Requires Mg(2+) as cofactor.

It is found in the cytoplasm. It catalyses the reaction Endonucleolytic cleavage to 5'-phosphomonoester.. Functionally, endonuclease that specifically degrades the RNA of RNA-DNA hybrids. The protein is Ribonuclease HII of Legionella pneumophila (strain Corby).